A 346-amino-acid polypeptide reads, in one-letter code: Probable electron transfer flavoprotein subunit alpha, mitochondrial (346 aa).

Residue 285–313 (LYVAIGISGAIQHLAGMKESKMIIAINKD) coordinates FAD.

Belongs to the ETF alpha-subunit/FixB family. Heterodimer of an alpha and a beta subunit. It depends on FAD as a cofactor.

The protein localises to the mitochondrion matrix. In terms of biological role, the electron transfer flavoprotein serves as a specific electron acceptor for several dehydrogenases, including five acyl-CoA dehydrogenases, glutaryl-CoA and sarcosine dehydrogenase. It transfers the electrons to the main mitochondrial respiratory chain via ETF-ubiquinone oxidoreductase (ETF dehydrogenase). This is Probable electron transfer flavoprotein subunit alpha, mitochondrial (ETF1) from Cryptococcus neoformans var. neoformans serotype D (strain B-3501A) (Filobasidiella neoformans).